The following is a 561-amino-acid chain: Long-chain-fatty-acid--CoA ligase (561 aa).

213 to 224 provides a ligand contact to ATP; that stretch reads YTGGTTGVAKGA.

It belongs to the ATP-dependent AMP-binding enzyme family. Mg(2+) is required as a cofactor.

Its subcellular location is the membrane. The enzyme catalyses a long-chain fatty acid + ATP + CoA = a long-chain fatty acyl-CoA + AMP + diphosphate. It functions in the pathway lipid metabolism; fatty acid beta-oxidation. Catalyzes the esterification, concomitant with transport, of exogenous long-chain fatty acids into metabolically active CoA thioesters for subsequent degradation or incorporation into phospholipids. The sequence is that of Long-chain-fatty-acid--CoA ligase (fadD) from Escherichia coli O157:H7.